The primary structure comprises 467 residues: ATP synthase subunit beta (467 aa).

156 to 163 (GGAGVGKT) provides a ligand contact to ATP.

This sequence belongs to the ATPase alpha/beta chains family. F-type ATPases have 2 components, CF(1) - the catalytic core - and CF(0) - the membrane proton channel. CF(1) has five subunits: alpha(3), beta(3), gamma(1), delta(1), epsilon(1). CF(0) has three main subunits: a(1), b(2) and c(9-12). The alpha and beta chains form an alternating ring which encloses part of the gamma chain. CF(1) is attached to CF(0) by a central stalk formed by the gamma and epsilon chains, while a peripheral stalk is formed by the delta and b chains.

The protein localises to the cell inner membrane. The catalysed reaction is ATP + H2O + 4 H(+)(in) = ADP + phosphate + 5 H(+)(out). In terms of biological role, produces ATP from ADP in the presence of a proton gradient across the membrane. The catalytic sites are hosted primarily by the beta subunits. The chain is ATP synthase subunit beta from Cupriavidus pinatubonensis (strain JMP 134 / LMG 1197) (Cupriavidus necator (strain JMP 134)).